The following is a 66-amino-acid chain: Stress-induced protein KIN2 (66 aa).

Residues 1–10 (MSETNKNAFQ) show a composition bias toward polar residues. The disordered stretch occupies residues 1-20 (MSETNKNAFQAGQAAGKAEE). 2 consecutive repeats follow at residues 31-35 (DAAAA) and 49-53 (DAAVG).

Interacts with DEK3. Expressed at high levels in embryos and mature seeds.

In Arabidopsis thaliana (Mouse-ear cress), this protein is Stress-induced protein KIN2.